The following is a 62-amino-acid chain: Protein translocase subunit SecE (62 aa).

Residues 40–60 (LLVLAVVGVLAYIIQLALTLI) traverse the membrane as a helical segment.

The protein belongs to the SecE/SEC61-gamma family. As to quaternary structure, component of the Sec protein translocase complex. Heterotrimer consisting of SecY (alpha), SecG (beta) and SecE (gamma) subunits. The heterotrimers can form oligomers, although 1 heterotrimer is thought to be able to translocate proteins. Interacts with the ribosome. May interact with SecDF, and other proteins may be involved.

The protein resides in the cell membrane. Functionally, essential subunit of the Sec protein translocation channel SecYEG. Clamps together the 2 halves of SecY. May contact the channel plug during translocation. In Saccharolobus solfataricus (strain ATCC 35092 / DSM 1617 / JCM 11322 / P2) (Sulfolobus solfataricus), this protein is Protein translocase subunit SecE.